The sequence spans 584 residues: Endogenous retrovirus group FC1 Env polyprotein (584 aa).

The first 22 residues, 1-22 (MARPSPLCLLLLLTLLPPIVPS), serve as a signal peptide directing secretion. Topologically, residues 23-514 (NSLLTEPPFR…NYGGGWWQSP (492 aa)) are extracellular. Residues Asn-69 and Asn-247 are each glycosylated (N-linked (GlcNAc...) asparagine). The CXXC motif lies at 251–254 (CFLC). Residues Asn-272, Asn-276, Asn-308, Asn-313, Asn-322, Asn-334, Asn-342, and Asn-346 are each glycosylated (N-linked (GlcNAc...) asparagine). The interval 388 to 413 (PLVIGVSLTSSLVASGLGTGAIVHFI) is fusion peptide. Positions 449 to 465 (MQNRRALDLLTADKGGT) match the CKS-17 motif. Residues Cys-466 and Cys-473 are joined by a disulfide bond. A CX6CC motif is present at residues 466 to 474 (CMFLGEECC). Asn-478 carries N-linked (GlcNAc...) asparagine glycosylation. The chain crosses the membrane as a helical span at residues 515–540 (LTTWIIPFISPILIICLLLLIAPCVL). The Cytoplasmic segment spans residues 541–584 (KFIKNRISEVSRVTVNQMLLHPYSRLPTSEDHYDVALTQQEAAR).

This sequence belongs to the gamma type-C retroviral envelope protein family. HERV class-I F(c)1 env subfamily. As to quaternary structure, the surface (SU) and transmembrane (TM) proteins form a heterodimer. SU and TM are attached by noncovalent interactions or by a labile interchain disulfide bond. Specific enzymatic cleavages in vivo yield the mature SU and TM proteins. In terms of processing, the CXXC motif is highly conserved across a broad range of retroviral envelope proteins. It is thought to participate in the formation of a labile disulfide bond possibly with the CX6CC motif present in the transmembrane protein.

It localises to the virion. The protein resides in the cell membrane. In terms of biological role, retroviral envelope proteins mediate receptor recognition and membrane fusion during early infection. Endogenous envelope proteins may have kept, lost or modified their original function during evolution. This endogenous envelope protein has lost its original fusogenic properties. SU mediates receptor recognition. Its function is as follows. TM anchors the envelope heterodimer to the viral membrane through one transmembrane domain. The other hydrophobic domain, called fusion peptide, mediates fusion of the viral membrane with the target cell membrane. This Pan troglodytes (Chimpanzee) protein is Endogenous retrovirus group FC1 Env polyprotein (ERVFC1).